A 223-amino-acid polypeptide reads, in one-letter code: Adenylate kinase 4, mitochondrial (223 aa).

15–20 is an a ribonucleoside 5'-triphosphate binding site; sequence GSGKGT. Residues 35–64 are NMP; the sequence is SSGHFLRENIKANTEVGDMAKQYIEKGLLV. Residues Ser36 and Arg41 each coordinate AMP. Position 60 is an N6-succinyllysine (Lys60). AMP contacts are provided by residues 62–64, 89–92, and Gln96; these read LLV and GFPR. The interval 125-162 is LID; sequence RRWIHPPSGRVYNLDFNPPHVHGMDDVTGEPLVQQEDD. A ribonucleoside 5'-triphosphate is bound by residues Arg126 and 135-136; that span reads VY. AMP is bound at residue Arg170. The residue at position 175 (Lys175) is an N6-acetyllysine. 2 positions are modified to N6-acetyllysine; alternate: Lys179 and Lys186. N6-succinyllysine; alternate occurs at positions 179 and 186. Thr199 provides a ligand contact to a ribonucleoside 5'-triphosphate.

Belongs to the adenylate kinase family. AK3 subfamily. As to quaternary structure, monomer. Interacts with SLC25A5/ANT2.

It is found in the mitochondrion matrix. It carries out the reaction a ribonucleoside 5'-phosphate + ATP = a ribonucleoside 5'-diphosphate + ADP. It catalyses the reaction AMP + ATP = 2 ADP. The catalysed reaction is GTP + AMP = GDP + ADP. The enzyme catalyses CMP + ATP = CDP + ADP. It carries out the reaction GTP + CMP = CDP + GDP. It catalyses the reaction dAMP + ATP = dADP + ADP. The catalysed reaction is dCMP + ATP = dCDP + ADP. The enzyme catalyses a 2'-deoxyribonucleoside 5'-diphosphate + ATP = a 2'-deoxyribonucleoside 5'-triphosphate + ADP. It carries out the reaction a ribonucleoside 5'-diphosphate + ATP = a ribonucleoside 5'-triphosphate + ADP. It catalyses the reaction GDP + ATP = GTP + ADP. The catalysed reaction is CDP + GTP = CTP + GDP. The enzyme catalyses CDP + ATP = CTP + ADP. It carries out the reaction UDP + ATP = UTP + ADP. It catalyses the reaction GTP + UDP = UTP + GDP. The catalysed reaction is dADP + GTP = dATP + GDP. The enzyme catalyses dCDP + GTP = dCTP + GDP. It carries out the reaction dCDP + ATP = dCTP + ADP. It catalyses the reaction dGDP + ATP = dGTP + ADP. The catalysed reaction is dTDP + GTP = dTTP + GDP. The enzyme catalyses dTDP + ATP = dTTP + ADP. In terms of biological role, broad-specificity mitochondrial nucleoside phosphate kinase involved in cellular nucleotide homeostasis by catalyzing nucleoside-phosphate interconversions. Similar to other adenylate kinases, preferentially catalyzes the phosphorylation of the nucleoside monophosphate AMP with ATP as phosphate donor to produce ADP. Phosphorylates only AMP when using GTP as phosphate donor. In vitro, can also catalyze the phosphorylation of CMP, dAMP and dCMP and use GTP as an alternate phosphate donor. Moreover, exhibits a diphosphate kinase activity, producing ATP, CTP, GTP, UTP, TTP, dATP, dCTP and dGTP from the corresponding diphosphate substrates with either ATP or GTP as phosphate donors. Plays a role in controlling cellular ATP levels by regulating phosphorylation and activation of the energy sensor protein kinase AMPK. Plays a protective role in the cellular response to oxidative stress. In Bos taurus (Bovine), this protein is Adenylate kinase 4, mitochondrial.